The following is a 266-amino-acid chain: HLA class II histocompatibility antigen, DR beta 3 chain (266 aa).

The N-terminal stretch at 1-29 (MVCLKLPGGSSLAALTVTLMVLSSRLAFA) is a signal peptide. A beta-1 region spans residues 30–124 (GDTRPRFLEL…GESFTVQRRV (95 aa)). At 30–227 (GDTRPRFLEL…RARSESAQSK (198 aa)) the chain is on the extracellular side. 2 disulfide bridges follow: Cys-44–Cys-108 and Cys-146–Cys-202. The N-linked (GlcNAc...) asparagine glycan is linked to Asn-48. Residues 125–227 (HPQVTVYPAK…RARSESAQSK (103 aa)) are beta-2. In terms of domain architecture, Ig-like C1-type spans 126 to 214 (PQVTVYPAKT…EHPSVTSALT (89 aa)). Residues 228-248 (MLSGVGGFVLGLLFLGAGLFI) form a helical membrane-spanning segment. At 249-266 (YFRNQKGHSGLQPTGFLS) the chain is on the cytoplasmic side.

This sequence belongs to the MHC class II family. As to quaternary structure, heterotrimer that consists of an alpha chain HLA-DRA, a beta chain HLA-DRB1 and a peptide (peptide-MHCII). Newly synthesized alpha and beta chains forms a heterodimer (MHCII) that associates with the CD74/invariant chain (Ii) in the endoplasmic reticulum (ER). Ii is a trimer composed of three subunits and each subunit interacts with one MHCII dimer, blocking the peptide-binding cleft. As a result, MHCII molecules cannot bind peptides present in the ER. The complex of MHCII and CD74/Ii is transported in vesicles from ER to Golgi to lysosomes, where it encounters antigenic peptides generated via proteolysis of endocytosed antigens. MHCII dimers are dissociated from CD74/Ii by the combined action of proteolysis and HLA-DM. Lysosomal enzymes such as cathepsin, degrade CD74/Ii leaving a 24 amino acid remnant called class II-associated Ii or CLIP. Interacts (via the peptide binding cleft) with CLIP; this interaction inhibits antigen peptide binding before entry in the endosomal compartment. The displacement of CLIP and replacement by a high affinity peptide in lysosomes is performed by HLA-DM heterodimer. HLA-DM catalyzes CLIP dissociation from MHCII, stabilizes empty MHCII and mediates the selection of high affinity peptides. Interacts with HLA-DM heterodimer; this interaction is direct. Interacts with TCR (via CDR3). Interacts (via beta-2 domain) with CD4 coreceptor (via Ig-like V-type domain); this interaction is of exceptionally low affinity yet necessary for optimal recognition of antigenic peptides. Post-translationally, ubiquitinated by MARCHF1 and MARCHF8 at Lys-254 leading to sorting into the endosome system and down-regulation of MHC class II. Expressed in professional APCs: monocyte/macrophages, dendritic cells and B cells (at protein level).

It is found in the cell membrane. The protein resides in the endoplasmic reticulum membrane. The protein localises to the lysosome membrane. It localises to the late endosome membrane. Its subcellular location is the autolysosome membrane. A beta chain of antigen-presenting major histocompatibility complex class II (MHCII) molecule. In complex with the alpha chain HLA-DRA, displays antigenic peptides on professional antigen presenting cells (APCs) for recognition by alpha-beta T cell receptor (TCR) on HLA-DRB3-restricted CD4-positive T cells. This guides antigen-specific T-helper effector functions, both antibody-mediated immune response and macrophage activation, to ultimately eliminate the infectious agents and transformed cells. Typically presents extracellular peptide antigens of 10 to 30 amino acids that arise from proteolysis of endocytosed antigens in lysosomes. In the tumor microenvironment, presents antigenic peptides that are primarily generated in tumor-resident APCs likely via phagocytosis of apoptotic tumor cells or macropinocytosis of secreted tumor proteins. Presents peptides derived from intracellular proteins that are trapped in autolysosomes after macroautophagy, a mechanism especially relevant for T cell selection in the thymus and central immune tolerance. The selection of the immunodominant epitopes follows two processing modes: 'bind first, cut/trim later' for pathogen-derived antigenic peptides and 'cut first, bind later' for autoantigens/self-peptides. The anchor residue at position 1 of the peptide N-terminus, usually a large hydrophobic residue, is essential for high affinity interaction with MHCII molecules. In terms of biological role, ALLELE DRB3*01:01: Exclusively presents several immunogenic epitopes derived from C.tetani neurotoxin tetX, playing a significant role in immune recognition and long-term protection. Presents viral epitopes derived from HHV-6B U11, TRX2/U56 and U85 antigens to polyfunctional CD4-positive T cells with cytotoxic activity implicated in control of HHV-6B infection. Functionally, ALLELE DRB3*02:02 Exclusively presents several immunogenic epitopes derived from C.tetani neurotoxin tetX, playing a significant role in immune recognition and long-term protection. Upon EBV infection, presents to CD4-positive T cells latent antigen EBNA2 (PRSPTVFYNIPPMPLPPSQL) and lytic antigen BZLF1 (LTAYHVSTAPTGSWF) peptides, driving oligoclonal expansion and selection of virus-specific memory T cell subsets with cytotoxic potential to directly eliminate virus-infected B cells. Presents viral epitopes derived from HHV-6B U11, gB/U39 and gH/U48 antigens to polyfunctional CD4-positive T cells with cytotoxic activity implicated in control of HHV-6B infection. Plays a minor role in CD4-positive T cell immune response against Dengue virus by presenting conserved peptides from capsid and non-structural NS3 proteins. Displays peptides derived from IAV matrix protein M, implying a role in protection against IAV infection. In the context of tumor immunesurveillance, may present to T-helper 1 cells an immunogenic epitope derived from tumor-associated antigen WT1 (KRYFKLSHLQMHSRKH), likely providing for effective antitumor immunity in a wide range of solid and hematological malignancies. Presents to Vbeta2-positive T-helper 1 cells specifically an immunodominant peptide derived from tumor antigen CTAG1A/NY-ESO-1(PGVLLKEFTVSGNILTIRLTAADHR) and confers protective memory response. In metastatic epithelial tumors, presents to intratumoral CD4-positive T cells a TP53 neoantigen (HYNYMCNSSCMGSMNRRPILTIITL) carrying G245S hotspot driver mutation and may mediate tumor regression. Its function is as follows. ALLELE DRB3*03:01: Presents a series of conserved peptides derived from the M.tuberculosis PPE family of proteins, in particular PPE29 and PPE33, known to be highly immunogenic. Presents immunogenic epitopes derived from C.tetani neurotoxin tetX, playing a role in immune recognition and long-term protection. Displays immunodominant viral peptides from HCV non-structural protein NS2, as part of a broad range T-helper response to resolve infection. This Homo sapiens (Human) protein is HLA class II histocompatibility antigen, DR beta 3 chain (HLA-DRB3).